The primary structure comprises 386 residues: Homeobox protein Hox-A13 (386 aa).

The homeobox DNA-binding region spans 320–379; that stretch reads GRKKRVPYTKVQLKELEREYATNKFITKDKRRRISATTNLSERQVTIWFQNRRVKEKKVI.

It belongs to the Abd-B homeobox family. As to quaternary structure, binds DNA as a homodimer. Interacts with MEIS1, MEIS2 and MEIS3.

It is found in the nucleus. Its function is as follows. Sequence-specific, AT-rich binding transcription factor which is part of a developmental regulatory system that provides cells with specific positional identities on the anterior-posterior axis. The protein is Homeobox protein Hox-A13 (Hoxa13) of Mus musculus (Mouse).